A 473-amino-acid chain; its full sequence is MILPDFSLARVLVVGDLMLDRYWFGGASRISPEAPVPVVRVESSEERIGGAGNVALNLAALGGEVDLLGYAGEDEAAAALERLLAVAGIRSHIERCPAVATITKLRVVSRQQQLIRLDFEDGFAHLDPAPLVTRFRALLEETGVVVLSDYAKGTLACVEEFIAASRRAGKPVLVDPKGVDFDRYRGATLLTPNLSEFEAVVGACCDDAEIERKGRALMTRLDLEALLVTRGEHGMSLLRPTAGALHLPAHGKEVYDVTGAGDTVISVLAAALAVGRPLTDAVALANLAAGIVVGKLGTASVSPEELAIAIHGQRAPRRGAITLAELLDVLIPLRRAGERIVVTNGCFDLLHPGHVHYLEQARALGDRLIVLVNGDDSVRRLKGAGRPVNPLPHRMAMLAALESVDWVVAFDGDTPRDEICAIRPHVLVKGGDYADITAIVGHDCVLETGGEVRILDFVEGHSTTRIIEAIRNG.

The interval 1 to 316 (MILPDFSLAR…AIAIHGQRAP (316 aa)) is ribokinase. 193–196 (NLSE) serves as a coordination point for ATP. Aspartate 262 is an active-site residue. The cytidylyltransferase stretch occupies residues 342–473 (VTNGCFDLLH…TRIIEAIRNG (132 aa)).

In the N-terminal section; belongs to the carbohydrate kinase PfkB family. This sequence in the C-terminal section; belongs to the cytidylyltransferase family. In terms of assembly, homodimer.

It catalyses the reaction D-glycero-beta-D-manno-heptose 7-phosphate + ATP = D-glycero-beta-D-manno-heptose 1,7-bisphosphate + ADP + H(+). The catalysed reaction is D-glycero-beta-D-manno-heptose 1-phosphate + ATP + H(+) = ADP-D-glycero-beta-D-manno-heptose + diphosphate. The protein operates within nucleotide-sugar biosynthesis; ADP-L-glycero-beta-D-manno-heptose biosynthesis; ADP-L-glycero-beta-D-manno-heptose from D-glycero-beta-D-manno-heptose 7-phosphate: step 1/4. It functions in the pathway nucleotide-sugar biosynthesis; ADP-L-glycero-beta-D-manno-heptose biosynthesis; ADP-L-glycero-beta-D-manno-heptose from D-glycero-beta-D-manno-heptose 7-phosphate: step 3/4. Catalyzes the phosphorylation of D-glycero-D-manno-heptose 7-phosphate at the C-1 position to selectively form D-glycero-beta-D-manno-heptose-1,7-bisphosphate. Functionally, catalyzes the ADP transfer from ATP to D-glycero-beta-D-manno-heptose 1-phosphate, yielding ADP-D-glycero-beta-D-manno-heptose. The polypeptide is Bifunctional protein HldE (Methylococcus capsulatus (strain ATCC 33009 / NCIMB 11132 / Bath)).